A 188-amino-acid chain; its full sequence is MSLFSLWVMAFGLSMDAFAVSICKGLAMEKFQWCGALKAGLYFGLFQAVMPLIGFLLGVQFSEYITDYDHWVAFFLLALIGVNMLRESLSDEDDEDSCSNDFNFKTMMTLGFATSIDALAVGVTFAFLSVDIYSSVVTIGLITAALSIIGVKSGHFLGKKIKTKAEILGGLILIGLGVKILMEHTLFG.

The next 6 helical transmembrane spans lie at 3 to 23, 39 to 59, 65 to 85, 110 to 130, 131 to 151, and 167 to 187; these read LFSL…VSIC, AGLY…LLGV, ITDY…VNML, LGFA…FLSV, DIYS…IIGV, and ILGG…HTLF.

This sequence belongs to the MntP (TC 9.B.29) family.

Its subcellular location is the cell inner membrane. Its function is as follows. Probably functions as a manganese efflux pump. This Mannheimia succiniciproducens (strain KCTC 0769BP / MBEL55E) protein is Putative manganese efflux pump MntP.